Consider the following 224-residue polypeptide: DNA mismatch repair protein MutH (224 aa).

It belongs to the MutH family.

It is found in the cytoplasm. In terms of biological role, sequence-specific endonuclease that cleaves unmethylated GATC sequences. It is involved in DNA mismatch repair. The chain is DNA mismatch repair protein MutH from Histophilus somni (strain 2336) (Haemophilus somnus).